A 623-amino-acid polypeptide reads, in one-letter code: C2H2-type transcription factor zfpA (623 aa).

Polar residues predominate over residues 202–219 (GLAVSSPMPNSGPHSRSV). Disordered regions lie at residues 202–256 (GLAV…EKGR) and 468–493 (SNKANSSLGSRPIMGNHNAVTKNGKA). Residues 227–239 (SISSTNSRRSQLS) show a composition bias toward low complexity. The C2H2-type zinc-finger motif lies at 255 to 276 (GRCPHPDCGRVFKDLKAHMLTH).

The protein resides in the nucleus. Transcription factor involved in fungal growth and virulence potential. Negatively regulates antifungal drug susceptibility via transcriptional inhibition of the expressions of drug efflux pumps in a crzA-dependent way. Under the treatment of azoles, both zfpA and crzA transfer to nuclei and coregulate the expression of multidrug transporters and then keep normal drug susceptibility in fungal cells. The protein is C2H2-type transcription factor zfpA of Aspergillus fumigatus (strain CBS 144.89 / FGSC A1163 / CEA10) (Neosartorya fumigata).